The primary structure comprises 342 residues: Oxygen-dependent coproporphyrinogen-III oxidase (342 aa).

Ser-98 is a substrate binding site. A divalent metal cation contacts are provided by His-102 and His-112. Catalysis depends on His-112, which acts as the Proton donor. A substrate-binding site is contributed by 114–116 (NYR). A divalent metal cation contacts are provided by His-146 and His-176. Residues 266-301 (YVEFNLVWDRGTIFGLQTNGRTESILMSLPPLARWE) form an important for dimerization region.

Belongs to the aerobic coproporphyrinogen-III oxidase family. Homodimer. Requires a divalent metal cation as cofactor.

The protein localises to the cytoplasm. The catalysed reaction is coproporphyrinogen III + O2 + 2 H(+) = protoporphyrinogen IX + 2 CO2 + 2 H2O. It participates in porphyrin-containing compound metabolism; protoporphyrin-IX biosynthesis; protoporphyrinogen-IX from coproporphyrinogen-III (O2 route): step 1/1. Functionally, involved in the heme and chlorophyll biosynthesis. Catalyzes the aerobic oxidative decarboxylation of propionate groups of rings A and B of coproporphyrinogen-III to yield the vinyl groups in protoporphyrinogen-IX. The protein is Oxygen-dependent coproporphyrinogen-III oxidase of Prochlorococcus marinus (strain MIT 9301).